A 342-amino-acid chain; its full sequence is Maltose regulon regulatory protein MalI (342 aa).

Residues 7–61 enclose the HTH lacI-type domain; that stretch reads ITIHDVALAAGVSVSTVSLVLSGKGRISTATGERVNAAIEELGFVRNRQASALRG. Positions 9-28 form a DNA-binding region, H-T-H motif; the sequence is IHDVALAAGVSVSTVSLVLS.

Functionally, repressor for the malX and malY genes. Also regulates its own expression. Binds maltose as an inducer. This Escherichia coli (strain K12) protein is Maltose regulon regulatory protein MalI (malI).